A 299-amino-acid polypeptide reads, in one-letter code: NAD kinase (299 aa).

The active-site Proton acceptor is Asp71. NAD(+) is bound by residues 71 to 72, 145 to 146, Arg173, Asp175, 186 to 191, Ala210, and Gln248; these read DG, ND, and TAYALS.

This sequence belongs to the NAD kinase family. The cofactor is a divalent metal cation.

It localises to the cytoplasm. It carries out the reaction NAD(+) + ATP = ADP + NADP(+) + H(+). Functionally, involved in the regulation of the intracellular balance of NAD and NADP, and is a key enzyme in the biosynthesis of NADP. Catalyzes specifically the phosphorylation on 2'-hydroxyl of the adenosine moiety of NAD to yield NADP. This Bordetella avium (strain 197N) protein is NAD kinase.